The sequence spans 605 residues: Microtubule-associated protein VP10 (605 aa).

Interacts with VP1.

Its subcellular location is the virion. It localises to the host cytoplasm. The protein resides in the host cytoskeleton. Its function is as follows. Minor inner capsid component. Displays NTPase and RNA 5'-triphosphatase (RTPase) activities. May function as a cofactor of polymerase VP1. Associates with microtubules and plays a role in the formation, structural organization and morphology of viral inclusions, where the assembly of cores and the replication of viral RNA occur. This Colorado tick fever virus (strain USA/Florio N-7180) (CTFV) protein is Microtubule-associated protein VP10.